Reading from the N-terminus, the 108-residue chain is MPKKDRTDQAPSKDVPKPEEGEVICVVKKMLGAEHIIIACLDGKERTARIPGRMRKKTWIKEGDVVLAAPWDFQPTKADIVYRYMNDEIRKLIEEKVISRDVIDQLRG.

One can recognise an S1-like domain in the interval 11 to 85 (PSKDVPKPEE…TKADIVYRYM (75 aa)).

Belongs to the eIF-1A family.

Seems to be required for maximal rate of protein biosynthesis. Enhances ribosome dissociation into subunits and stabilizes the binding of the initiator Met-tRNA(I) to 40 S ribosomal subunits. The polypeptide is Translation initiation factor 1A (eIF1A) (Metallosphaera sedula (strain ATCC 51363 / DSM 5348 / JCM 9185 / NBRC 15509 / TH2)).